The sequence spans 358 residues: Histidinol-phosphate aminotransferase (358 aa).

Lys-221 is subject to N6-(pyridoxal phosphate)lysine.

The protein belongs to the class-II pyridoxal-phosphate-dependent aminotransferase family. Histidinol-phosphate aminotransferase subfamily. In terms of assembly, homodimer. The cofactor is pyridoxal 5'-phosphate.

It catalyses the reaction L-histidinol phosphate + 2-oxoglutarate = 3-(imidazol-4-yl)-2-oxopropyl phosphate + L-glutamate. It participates in amino-acid biosynthesis; L-histidine biosynthesis; L-histidine from 5-phospho-alpha-D-ribose 1-diphosphate: step 7/9. The chain is Histidinol-phosphate aminotransferase from Caldicellulosiruptor saccharolyticus (strain ATCC 43494 / DSM 8903 / Tp8T 6331).